The chain runs to 312 residues: NAD-dependent protein deacylase Sirt4 (312 aa).

A mitochondrion-targeting transit peptide spans 1–16 (MRVGQLLRFRSTSLRS). In terms of domain architecture, Deacetylase sirtuin-type spans 28–312 (KPVVEDDIKR…FDFRNSKSVS (285 aa)). Residues 53–73 (GAGI…VGLY) and 134–137 (QNVD) contribute to the NAD(+) site. Catalysis depends on histidine 152, which acts as the Proton acceptor. Zn(2+)-binding residues include cysteine 160, cysteine 163, cysteine 211, and cysteine 214. Residues 251–253 (GSS), 277–279 (NIG), and cysteine 295 each bind NAD(+).

Belongs to the sirtuin family. Class II subfamily. Requires Zn(2+) as cofactor.

It is found in the mitochondrion matrix. It carries out the reaction N(6)-acetyl-L-lysyl-[protein] + NAD(+) + H2O = 2''-O-acetyl-ADP-D-ribose + nicotinamide + L-lysyl-[protein]. NAD-dependent protein deacylase. Catalyzes the NAD-dependent hydrolysis of acyl groups from lysine residues. This is NAD-dependent protein deacylase Sirt4 (Sirt4) from Drosophila melanogaster (Fruit fly).